The primary structure comprises 258 residues: MKRIAMLAAACVIAVPAFAQNVATVNGKPITQKSLDEFVKLVVSQGATDSPQLREQIKQEMINRQVFVQAAEKDGVAKQADVQTEIELARQGILVRALMADYLQKHPVTDAQVKAEYEKIKKEQAGKMEYKVRHILVEDEKTANDLLAQVKSNKNKFDDLAKKNSKDPGSAERGGDLGWAPATNYVQPFAEAVTKLKKGQLVDKPVQTQFGWHVIQVDDTRPVEFPAMDQVRPQLEEMLRQQTLANYQKQLREQAKIQ.

An N-terminal signal peptide occupies residues 1-19 (MKRIAMLAAACVIAVPAFA). The PpiC domain maps to 127 to 219 (KMEYKVRHIL…FGWHVIQVDD (93 aa)).

This sequence belongs to the PpiC/parvulin rotamase family.

It carries out the reaction [protein]-peptidylproline (omega=180) = [protein]-peptidylproline (omega=0). The protein is Probable parvulin-type peptidyl-prolyl cis-trans isomerase of Bordetella parapertussis (strain 12822 / ATCC BAA-587 / NCTC 13253).